The following is a 354-amino-acid chain: Uroporphyrinogen decarboxylase (354 aa).

Substrate-binding positions include 27–31 (RQAGR), Asp-77, Tyr-154, Thr-209, and His-327.

It belongs to the uroporphyrinogen decarboxylase family. As to quaternary structure, homodimer.

The protein resides in the cytoplasm. It carries out the reaction uroporphyrinogen III + 4 H(+) = coproporphyrinogen III + 4 CO2. Its pathway is porphyrin-containing compound metabolism; protoporphyrin-IX biosynthesis; coproporphyrinogen-III from 5-aminolevulinate: step 4/4. Its function is as follows. Catalyzes the decarboxylation of four acetate groups of uroporphyrinogen-III to yield coproporphyrinogen-III. This is Uroporphyrinogen decarboxylase from Pseudomonas putida (strain GB-1).